The sequence spans 224 residues: UPF0758 protein PFL_6051 (224 aa).

One can recognise an MPN domain in the interval 102–224 (ALENPLVVRD…PLSMAEYGWI (123 aa)). Zn(2+)-binding residues include His-173, His-175, and Asp-186. The JAMM motif signature appears at 173 to 186 (HNHPSGICEPSPAD).

This sequence belongs to the UPF0758 family.

This chain is UPF0758 protein PFL_6051, found in Pseudomonas fluorescens (strain ATCC BAA-477 / NRRL B-23932 / Pf-5).